A 336-amino-acid polypeptide reads, in one-letter code: tRNA N6-adenosine threonylcarbamoyltransferase (336 aa).

Residues histidine 114 and histidine 118 each coordinate Fe cation. Substrate is bound by residues 136–140 (LVSGG), aspartate 169, glycine 182, aspartate 186, and asparagine 275. Aspartate 301 lines the Fe cation pocket.

The protein belongs to the KAE1 / TsaD family. Fe(2+) serves as cofactor.

It localises to the cytoplasm. It carries out the reaction L-threonylcarbamoyladenylate + adenosine(37) in tRNA = N(6)-L-threonylcarbamoyladenosine(37) in tRNA + AMP + H(+). Its function is as follows. Required for the formation of a threonylcarbamoyl group on adenosine at position 37 (t(6)A37) in tRNAs that read codons beginning with adenine. Is involved in the transfer of the threonylcarbamoyl moiety of threonylcarbamoyl-AMP (TC-AMP) to the N6 group of A37, together with TsaE and TsaB. TsaD likely plays a direct catalytic role in this reaction. This Streptococcus pneumoniae serotype 4 (strain ATCC BAA-334 / TIGR4) protein is tRNA N6-adenosine threonylcarbamoyltransferase.